Consider the following 224-residue polypeptide: Large ribosomal subunit protein uL1 (224 aa).

This sequence belongs to the universal ribosomal protein uL1 family. As to quaternary structure, part of the 50S ribosomal subunit.

Functionally, binds directly to 23S rRNA. The L1 stalk is quite mobile in the ribosome, and is involved in E site tRNA release. Its function is as follows. Protein L1 is also a translational repressor protein, it controls the translation of the L11 operon by binding to its mRNA. The sequence is that of Large ribosomal subunit protein uL1 from Borrelia duttonii (strain Ly).